Here is a 501-residue protein sequence, read N- to C-terminus: Glycerol kinase (501 aa).

An ADP-binding site is contributed by T17. ATP is bound by residues T17, T18, and S19. Position 17 (T17) interacts with sn-glycerol 3-phosphate. R21 provides a ligand contact to ADP. Residues R87, E88, Y139, and D243 each coordinate sn-glycerol 3-phosphate. Glycerol is bound by residues R87, E88, Y139, D243, and Q244. The ADP site is built by T265 and G308. The ATP site is built by T265, G308, Q312, and G409. Residues G409 and N413 each coordinate ADP.

Belongs to the FGGY kinase family.

It catalyses the reaction glycerol + ATP = sn-glycerol 3-phosphate + ADP + H(+). The protein operates within polyol metabolism; glycerol degradation via glycerol kinase pathway; sn-glycerol 3-phosphate from glycerol: step 1/1. Its activity is regulated as follows. Inhibited by fructose 1,6-bisphosphate (FBP). Its function is as follows. Key enzyme in the regulation of glycerol uptake and metabolism. Catalyzes the phosphorylation of glycerol to yield sn-glycerol 3-phosphate. This Pseudomonas fluorescens (strain ATCC BAA-477 / NRRL B-23932 / Pf-5) protein is Glycerol kinase.